The sequence spans 338 residues: Phospho-2-dehydro-3-deoxyheptonate aldolase (338 aa).

The protein belongs to the class-I DAHP synthase family. Homotetramer. A divalent metal cation serves as cofactor.

It carries out the reaction D-erythrose 4-phosphate + phosphoenolpyruvate + H2O = 7-phospho-2-dehydro-3-deoxy-D-arabino-heptonate + phosphate. The protein operates within metabolic intermediate biosynthesis; chorismate biosynthesis; chorismate from D-erythrose 4-phosphate and phosphoenolpyruvate: step 1/7. Its activity is regulated as follows. Inhibited by L-phenylalanine and L-tyrosine. In terms of biological role, catalyzes the condensation of phosphoenolpyruvate (PEP) and D-erythrose-4-phosphate (E4P) giving rise to 3-deoxy-D-arabino-heptulosonate-7-phosphate (DAHP). The chain is Phospho-2-dehydro-3-deoxyheptonate aldolase (aroF) from Thermotoga maritima (strain ATCC 43589 / DSM 3109 / JCM 10099 / NBRC 100826 / MSB8).